Here is a 367-residue protein sequence, read N- to C-terminus: CCCH-type zinc finger protein moe-3 (367 aa).

Basic and acidic residues predominate over residues 1 to 15 (MSKVKGDLEKSDKRP). Residues 1–57 (MSKVKGDLEKSDKRPPSSMSTGSADSGVFSSGVHASSPSHSQGSSSQSGPPSPTTQL) are disordered. Residues 30 to 49 (SSGVHASSPSHSQGSSSQSG) show a composition bias toward low complexity. Residues 63–92 (ETANLIAVNEQLRKEIAENKQIQTNQMRAL) are a coiled coil. The disordered stretch occupies residues 107–126 (SISPHHGFPQRPPRGERRMQ). C3H1-type zinc fingers lie at residues 130-158 (SYKTVICQAWLESKTCTFAENCRFAHGEE) and 172-200 (KYKTKLCDKYTTTGLCPYGKRCLFIHPDN). The tract at residues 235 to 268 (NTRNSYNQQPPPMGGLEMQSSPMKSSSDSSHMRS) is disordered. The segment covering 252 to 268 (MQSSPMKSSSDSSHMRS) has biased composition (low complexity).

Exclusively expressed in the hermaphrodite gonad. Weakly distributed throughout gonadal oocytes from the mitotic stage to the developing diakinesis stage, with expression restricted to the distal region of the gonad.

In terms of biological role, zinc-finger protein that may play a role in oocyte maturation and fertility. This is CCCH-type zinc finger protein moe-3 from Caenorhabditis elegans.